We begin with the raw amino-acid sequence, 1000 residues long: Lysine-specific histone demethylase 1 (1000 aa).

Positions 104-123 (RRPAGRRGRPALNTSNSLER) are disordered. Residues 107–137 (AGRRGRPALNTSNSLERNGTRYVSAEAPISV) adopt a coiled-coil conformation. The SWIRM domain occupies 153–249 (CYESAIASNL…YGCIYIISSL (97 aa)). FAD is bound by residues 260-302 (VAII…IYEA), glutamate 301, and 328-329 (LA). The segment at 279–950 (LFAQYEQDFL…RCESQPIPED (672 aa)) is demethylase activity. Positions 434 to 529 (IGWYISIEAF…ADMLNSLAST (96 aa)) form a coiled coil. Residues 780 to 800 (TYGTKRNAQQALGKEGERENK) form a disordered region. A DNA-binding region (HMG box) is located at residues 841–921 (SRPSANPYLL…NYSTRLEEYQ (81 aa)). 908–909 (AR) is an FAD binding site. Basic and acidic residues predominate over residues 959–972 (EQEDEHLHPEKEGM). Positions 959–1000 (EQEDEHLHPEKEGMSVENSDDDYHDDLDYEDSISEVFPDNFS) are disordered. Acidic residues predominate over residues 976-991 (NSDDDYHDDLDYEDSI).

It belongs to the flavin monoamine oxidase family. In terms of assembly, component of the SWM histone demethylase complex composed of at least lsd1, lsd2, phf1 and phf2. Interacts directly with lsd2. The cofactor is FAD.

The protein resides in the nucleus. Catalytic component of the SWM histone demethylase complex that specifically demethylates H3K9me2, a specific tag for epigenetic transcriptional activation, thereby acting as a corepressor. Acts by oxidizing the substrate by FAD to generate the corresponding imine that is subsequently hydrolyzed. Has a role in regulating heterochromatin propagation and euchromatic transcription. Also has a gene activating role. This Schizosaccharomyces pombe (strain 972 / ATCC 24843) (Fission yeast) protein is Lysine-specific histone demethylase 1 (lsd1).